The sequence spans 348 residues: Beta-hexosaminidase (348 aa).

Residues Asp-64, Arg-72, Arg-138, and 168 to 169 (KH) each bind substrate. His-181 functions as the Proton donor/acceptor in the catalytic mechanism. Asp-252 serves as the catalytic Nucleophile.

The protein belongs to the glycosyl hydrolase 3 family. NagZ subfamily.

It localises to the cytoplasm. It catalyses the reaction Hydrolysis of terminal non-reducing N-acetyl-D-hexosamine residues in N-acetyl-beta-D-hexosaminides.. It participates in cell wall biogenesis; peptidoglycan recycling. Plays a role in peptidoglycan recycling by cleaving the terminal beta-1,4-linked N-acetylglucosamine (GlcNAc) from peptide-linked peptidoglycan fragments, giving rise to free GlcNAc, anhydro-N-acetylmuramic acid and anhydro-N-acetylmuramic acid-linked peptides. In Nitrosomonas eutropha (strain DSM 101675 / C91 / Nm57), this protein is Beta-hexosaminidase.